Reading from the N-terminus, the 461-residue chain is Cytochrome c biogenesis protein CcsB (461 aa).

3 helical membrane passes run 32–52 (LRLA…GTVI), 91–111 (TWWF…CTFT), and 178–198 (IGPI…IWGA).

Belongs to the Ccs1/CcsB family. In terms of assembly, may interact with CcsA.

The protein localises to the cellular thylakoid membrane. In terms of biological role, required during biogenesis of c-type cytochromes (cytochrome c6 and cytochrome f) at the step of heme attachment. This is Cytochrome c biogenesis protein CcsB from Nostoc sp. (strain PCC 7120 / SAG 25.82 / UTEX 2576).